Reading from the N-terminus, the 734-residue chain is Polyribonucleotide nucleotidyltransferase (734 aa).

The Mg(2+) site is built by Asp505 and Asp511. In terms of domain architecture, KH spans Pro572–Ile631. An S1 motif domain is found at Gly641 to Lys715.

The protein belongs to the polyribonucleotide nucleotidyltransferase family. Requires Mg(2+) as cofactor.

The protein resides in the cytoplasm. The enzyme catalyses RNA(n+1) + phosphate = RNA(n) + a ribonucleoside 5'-diphosphate. In terms of biological role, involved in mRNA degradation. Catalyzes the phosphorolysis of single-stranded polyribonucleotides processively in the 3'- to 5'-direction. This Prosthecochloris aestuarii (strain DSM 271 / SK 413) protein is Polyribonucleotide nucleotidyltransferase.